The following is a 288-amino-acid chain: Bifunctional protein FolD (288 aa).

NADP(+) contacts are provided by residues 166–168 (GAS) and Ile-232.

Belongs to the tetrahydrofolate dehydrogenase/cyclohydrolase family. As to quaternary structure, homodimer.

It carries out the reaction (6R)-5,10-methylene-5,6,7,8-tetrahydrofolate + NADP(+) = (6R)-5,10-methenyltetrahydrofolate + NADPH. The catalysed reaction is (6R)-5,10-methenyltetrahydrofolate + H2O = (6R)-10-formyltetrahydrofolate + H(+). It participates in one-carbon metabolism; tetrahydrofolate interconversion. Functionally, catalyzes the oxidation of 5,10-methylenetetrahydrofolate to 5,10-methenyltetrahydrofolate and then the hydrolysis of 5,10-methenyltetrahydrofolate to 10-formyltetrahydrofolate. This Escherichia coli (strain SMS-3-5 / SECEC) protein is Bifunctional protein FolD.